A 928-amino-acid polypeptide reads, in one-letter code: G-protein coupled receptor family C group 6 member A (928 aa).

A signal peptide spans M1–S20. Residues C21–A594 lie on the Extracellular side of the membrane. N332 and N555 each carry an N-linked (GlcNAc...) asparagine glycan. Residues L595 to F615 traverse the membrane as a helical segment. At T616 to L630 the chain is on the cytoplasmic side. A helical transmembrane segment spans residues V631–I651. The Extracellular portion of the chain corresponds to G652–S669. Residues F670–F690 traverse the membrane as a helical segment. Over D691–P706 the chain is Cytoplasmic. Residues I707–A727 traverse the membrane as a helical segment. Residues P728–L750 lie on the Extracellular side of the membrane. The chain crosses the membrane as a helical span at residues A751–F771. Over K772–K784 the chain is Cytoplasmic. A helical membrane pass occupies residues F785–A805. Residues T806–L812 are Extracellular-facing. The helical transmembrane segment at P813–F833 threads the bilayer. Over P834–I928 the chain is Cytoplasmic.

The protein belongs to the G-protein coupled receptor 3 family. As to quaternary structure, homodimer; disulfide-linked. Post-translationally, N-glycosylated. As to expression, high expression in soft palate. Weak expression in kidney, liver, lung and brain. No expression detected in heart, testis, skeletal muscle amd spleen.

The protein localises to the cell membrane. Receptor activated by multiple ligands, including osteocalcin (BGLAP), basic amino acids, and various cations. Activated by amino acids with a preference for basic amino acids such as L-Lys, L-Arg and L-ornithine but also by small and polar amino acids. The L-alpha amino acids respond is augmented by divalent cations Ca(2+) and Mg(2+). Seems to act through a G(q)/G(11) and G(i)-coupled pathway. Regulates testosterone production by acting as a ligand for uncarboxylated osteocalcin hormone: osteocalcin-binding at the surface of Leydig cells initiates a signaling response that promotes the expression of enzymes required for testosterone synthesis in a CREB-dependent manner. Mediates the non-genomic effects of androgens in multiple tissue. May coordinate nutritional and hormonal anabolic signals through the sensing of extracellular amino acids, osteocalcin, divalent ions and its responsiveness to anabolic steroids. This Rattus norvegicus (Rat) protein is G-protein coupled receptor family C group 6 member A (Gprc6a).